Here is a 184-residue protein sequence, read N- to C-terminus: Bacterial microcompartment shell protein PduT (184 aa).

BMC domains lie at 4-86 and 96-182; these read AIGI…PAIS and AVGI…RQMV. Cys38 contacts [4Fe-4S] cluster.

This sequence belongs to the bacterial microcompartments protein family. In terms of assembly, homotrimerizes to form a pseudohexamer with a large central pore, which is probably the binding site for the [4Fe-4S] center. Interacts with PduS. Originally suggested to be a homotetramer; this is incorrect. Requires [4Fe-4S] cluster as cofactor.

The protein localises to the bacterial microcompartment. It functions in the pathway polyol metabolism; 1,2-propanediol degradation. Its function is as follows. A minor shell protein of the bacterial microcompartment (BMC) dedicated to 1,2-propanediol (1,2-PD) degradation. Overexpression of this protein leads to cells with either deposits or having lamina-like structures in the cytoplasm. Not absolutely required to make artificial BMCs. May selectively transport specific metabolites. Functionally, expression of a cosmid containing the full 21-gene pdu operon in E.coli allows E.coli to grow on 1,2-propanediol (1,2-PD) with the appearance of bacterial microcompartments (BMC) in its cytoplasm. In terms of biological role, the 1,2-PD-specific bacterial microcompartment (BMC) concentrates low levels of 1,2-PD catabolic enzymes, concentrates volatile reaction intermediates thus enhancing pathway flux and keeps the level of toxic, mutagenic propionaldehyde low. This Citrobacter freundii protein is Bacterial microcompartment shell protein PduT.